The sequence spans 426 residues: Phosphoribosylamine--glycine ligase (426 aa).

An ATP-grasp domain is found at 107–313; that stretch reads KDFMQKYGVK…FLNVINSALN (207 aa). 133–194 contacts ATP; the sequence is LDKISYPVVI…EEFLDGVEIS (62 aa). Mg(2+) contacts are provided by glutamate 283 and asparagine 285.

It belongs to the GARS family. Mg(2+) serves as cofactor. Requires Mn(2+) as cofactor.

The enzyme catalyses 5-phospho-beta-D-ribosylamine + glycine + ATP = N(1)-(5-phospho-beta-D-ribosyl)glycinamide + ADP + phosphate + H(+). It participates in purine metabolism; IMP biosynthesis via de novo pathway; N(1)-(5-phospho-D-ribosyl)glycinamide from 5-phospho-alpha-D-ribose 1-diphosphate: step 2/2. In Fusobacterium nucleatum subsp. nucleatum (strain ATCC 25586 / DSM 15643 / BCRC 10681 / CIP 101130 / JCM 8532 / KCTC 2640 / LMG 13131 / VPI 4355), this protein is Phosphoribosylamine--glycine ligase.